The primary structure comprises 156 residues: Small ribosomal subunit protein uS7 (156 aa).

The protein belongs to the universal ribosomal protein uS7 family. As to quaternary structure, part of the 30S ribosomal subunit. Contacts proteins S9 and S11.

Functionally, one of the primary rRNA binding proteins, it binds directly to 16S rRNA where it nucleates assembly of the head domain of the 30S subunit. Is located at the subunit interface close to the decoding center, probably blocks exit of the E-site tRNA. This Clostridium novyi (strain NT) protein is Small ribosomal subunit protein uS7.